A 104-amino-acid polypeptide reads, in one-letter code: Sweet protein mabinlin-3 (104 aa).

Cystine bridges form between C4-C53, C17-C42, C43-C91, and C55-C99.

This sequence belongs to the 2S seed storage albumins family. In terms of assembly, heterodimer of a small A and a large B chain linked by disulfide bonds.

In terms of biological role, heat stable 2S seed storage protein having sweetness-inducing activity. The protein is Sweet protein mabinlin-3 of Capparis masaikai (Mabinlang).